A 650-amino-acid polypeptide reads, in one-letter code: MEESNNFLLSPDSIWSQLLENSYALNEINCFQSFGTIDNNNNNYSNNNKNGNEELSQPTEIQQQLQNYQELQQQKYQERQQQYQTQYQQPYIEPIFEIVVTQQDQQELIPQQQQQEQDQQEDQDQEQEQELQQQQQQLQQQQQQQQQQQQQQQQQQQQQQQQQQQQQKQQKQQKQQQQEQPSIIKEQDQEQKKIIQEQLCEKSIQTLENHFFNTNTPKLDHQILSNYSEFFKINQPITDIPTTLNTNLQSDNNNNNNNNNNNNNNNNNNNNNNNNNNNLLNEKQIESTSKIKRINLGYDITKITFNKIEKGKRNQTESSKNFRERKKEYIKDIELKLKELTIENDKLKKENDTLKKIGIEIMRSEPESINMIMECKKIIKKLEKALIDNDERSLIYLLYLYHSETSKRYSLTEIEVDKIINPYSQLKLKLAGYIQNPTTEILDIFGGNNNNNNNNNNNNNNNNNNNDNDDDNEEEEISWFKKYKKEANLTIEQSNKLDLLRDYHCLKFELLLKERRELDRDIKKLYNGIALSGFDLTPRSLANWDIDKQIETTNKLNLLKIKIISSLNLNLDTFSSISSILSPKQEALLLVRAHLFGSNKKNPHIEILNNVWTGLISKSSSPSFFEIAKLLKEMSDSANAKIMEDYLYKK.

Positions 37-180 form a coiled coil; it reads IDNNNNNYSN…KQQKQQQQEQ (144 aa). Disordered stretches follow at residues 109–130 and 242–279; these read IPQQ…QEQE and TTLN…NNNL. Acidic residues predominate over residues 118–129; the sequence is DQQEDQDQEQEQ. Residues 242–251 show a composition bias toward polar residues; the sequence is TTLNTNLQSD. The span at 252–278 shows a compositional bias: low complexity; it reads NNNNNNNNNNNNNNNNNNNNNNNNNNN. The stretch at 259-286 forms a coiled coil; the sequence is NNNNNNNNNNNNNNNNNNNNLLNEKQIE. A bZIP domain is found at 305 to 368; it reads FNKIEKGKRN…IEIMRSEPES (64 aa). The segment at 307–327 is basic motif; sequence KIEKGKRNQTESSKNFRERKK. A leucine-zipper region spans residues 330 to 337; sequence IKDIELKL. Over residues 452–466 the composition is skewed to low complexity; sequence NNNNNNNNNNNNNNN. Residues 452–473 are disordered; the sequence is NNNNNNNNNNNNNNNDNDDDNE.

This sequence belongs to the bZIP family.

The protein localises to the nucleus. Functionally, probable transcriptional regulator. The polypeptide is Probable basic-leucine zipper transcription factor K (bzpK) (Dictyostelium discoideum (Social amoeba)).